The following is a 526-amino-acid chain: GMP synthase [glutamine-hydrolyzing] (526 aa).

Residues 13–204 (TVLVVDFGAQ…LYRGAGLSPD (192 aa)) enclose the Glutamine amidotransferase type-1 domain. Cys-90 serves as the catalytic Nucleophile. Catalysis depends on residues His-178 and Glu-180. Positions 205–400 (WTTGNVIEEQ…LGLPDEIVQR (196 aa)) constitute a GMPS ATP-PPase domain. Residue 232 to 238 (SGGVDSA) participates in ATP binding.

In terms of assembly, homodimer.

It carries out the reaction XMP + L-glutamine + ATP + H2O = GMP + L-glutamate + AMP + diphosphate + 2 H(+). It participates in purine metabolism; GMP biosynthesis; GMP from XMP (L-Gln route): step 1/1. Catalyzes the synthesis of GMP from XMP. This is GMP synthase [glutamine-hydrolyzing] (guaA) from Streptomyces coelicolor (strain ATCC BAA-471 / A3(2) / M145).